The primary structure comprises 313 residues: Ribosomal RNA small subunit methyltransferase H (313 aa).

S-adenosyl-L-methionine is bound by residues 35–37 (GGH), Asp-55, Phe-79, Asp-101, and Gln-108.

Belongs to the methyltransferase superfamily. RsmH family.

It localises to the cytoplasm. The catalysed reaction is cytidine(1402) in 16S rRNA + S-adenosyl-L-methionine = N(4)-methylcytidine(1402) in 16S rRNA + S-adenosyl-L-homocysteine + H(+). Its function is as follows. Specifically methylates the N4 position of cytidine in position 1402 (C1402) of 16S rRNA. In Salmonella typhi, this protein is Ribosomal RNA small subunit methyltransferase H.